We begin with the raw amino-acid sequence, 185 residues long: Elongation factor P 1 (185 aa).

It belongs to the elongation factor P family.

It localises to the cytoplasm. It functions in the pathway protein biosynthesis; polypeptide chain elongation. Functionally, involved in peptide bond synthesis. Stimulates efficient translation and peptide-bond synthesis on native or reconstituted 70S ribosomes in vitro. Probably functions indirectly by altering the affinity of the ribosome for aminoacyl-tRNA, thus increasing their reactivity as acceptors for peptidyl transferase. The chain is Elongation factor P 1 (efp1) from Chlamydia pneumoniae (Chlamydophila pneumoniae).